Consider the following 391-residue polypeptide: MTQFTTELLNFLAQKQDIDEFFRTSLETAMNDLLQAELSAFLGYEPYDKVGYNSGNSRNGSYSRQFETKYGTVQLSIPRDRNGNFSPALLPAYGRRDDHLEEMVIKLYQTGVTTREISDIIERMYGHHYSPATISNISKATQENVATFHERSLEANYSVLFLDGTYLPLRRGTVSKECIHIALGITPEGQKAVLGYEIAPNENNASWSTLLDKLQNQGIQQVSLVVTDGFKGLEQIISQAYPLAKQQRCLIHISRNLASKVKRADRAVILEQFKTIYRAENLEMAVQALENFIAEWKPKYRKVMESLENTDNLLTFYQFPYQIWHSIYSTNLIESLNKEIKRQTKKKVLFPNEEALERYLVTLFEDYNFKQSQRIHKGFGQCADTLESLFD.

The protein belongs to the transposase mutator family.

Its function is as follows. Required for the transposition of the insertion element. The chain is Transposase for insertion sequence element IS905 (tra905) from Lactococcus lactis subsp. lactis (strain IL1403) (Streptococcus lactis).